The following is a 72-amino-acid chain: Small proline-rich protein 2A (72 aa).

Residues 1–11 are compositionally biased toward low complexity; that stretch reads MSYQQQQCKQP. A disordered region spans residues 1 to 20; it reads MSYQQQQCKQPCQPPPVCPT. 3 repeat units span residues 21–29, 30–38, and 39–47. Positions 21–47 are 3 X 9 AA tandem repeats of P-K-C-P-[EQ]-P-C-P-P; the sequence is PKCPEPCPPPKCPEPCPPPKCPQPCPP. Residues 42-72 are disordered; it reads PQPCPPQQCQQKYPPVTPSPPCQSKYPPKSK.

Belongs to the cornifin (SPRR) family. Post-translationally, forms five pairs of intrachain disulfide bonds. Expressed in intestine; selectively expressed in goblet cells.

The protein resides in the secreted. The protein localises to the extracellular space. It localises to the cytoplasmic vesicle. It is found in the secretory vesicle. Its function is as follows. Gut bactericidal protein that selectively kills Gram-positive bacteria by binding to negatively charged lipids on bacterial membranes, leading to bacterial membrane permeabilization and disruption. Specifically binds lipids bearing negatively charged headgroups, such as phosphatidic acid, phosphatidylserine (PS), cardiolipin (CL), and phosphatidylinositol phosphates, but not to zwitterionic or neutral lipids. Induced by type-2 cytokines in response to helminth infection and is required to protect against helminth-induced bacterial invasion of intestinal tissue. May also be involved in the development of the cornified envelope of squamous epithelia; however, additional evidences are required to confirm this result in vivo. This Homo sapiens (Human) protein is Small proline-rich protein 2A.